Here is a 348-residue protein sequence, read N- to C-terminus: Mannonate dehydratase (348 aa).

This sequence belongs to the mannonate dehydratase family. Requires Fe(2+) as cofactor. It depends on Mn(2+) as a cofactor.

The catalysed reaction is D-mannonate = 2-dehydro-3-deoxy-D-gluconate + H2O. It participates in carbohydrate metabolism; pentose and glucuronate interconversion. Its function is as follows. Catalyzes the dehydration of D-mannonate. This chain is Mannonate dehydratase, found in Staphylococcus haemolyticus (strain JCSC1435).